A 203-amino-acid chain; its full sequence is N-(5'-phosphoribosyl)anthranilate isomerase (203 aa).

The protein belongs to the TrpF family.

The enzyme catalyses N-(5-phospho-beta-D-ribosyl)anthranilate = 1-(2-carboxyphenylamino)-1-deoxy-D-ribulose 5-phosphate. The protein operates within amino-acid biosynthesis; L-tryptophan biosynthesis; L-tryptophan from chorismate: step 3/5. The protein is N-(5'-phosphoribosyl)anthranilate isomerase of Thermoanaerobacter sp. (strain X514).